The primary structure comprises 538 residues: NAD(P)H-quinone oxidoreductase chain 4 (538 aa).

14 helical membrane-spanning segments follow: residues 11 to 31 (FPWL…VPFI), 43 to 63 (YALI…FKGF), 95 to 115 (MPLI…AWPV), 119 to 139 (PKLF…VFAV), 143 to 163 (LLFF…LAIW), 175 to 195 (FIIY…AMGF), 217 to 237 (GFQL…LPIV), 251 to 271 (TAPV…YALL), 285 to 305 (FAPL…LTSF), 314 to 334 (IAYS…SFSS), 340 to 360 (AMLQ…LVGA), 382 to 404 (IMFA…SGFI), 425 to 445 (IVVA…LLSM), and 472 to 492 (IYII…PKIM).

This sequence belongs to the complex I subunit 4 family.

Its subcellular location is the cellular thylakoid membrane. It carries out the reaction a plastoquinone + NADH + (n+1) H(+)(in) = a plastoquinol + NAD(+) + n H(+)(out). The enzyme catalyses a plastoquinone + NADPH + (n+1) H(+)(in) = a plastoquinol + NADP(+) + n H(+)(out). Functionally, NDH-1 shuttles electrons from NAD(P)H, via FMN and iron-sulfur (Fe-S) centers, to quinones in the respiratory chain. The immediate electron acceptor for the enzyme in this species is believed to be plastoquinone. Couples the redox reaction to proton translocation (for every two electrons transferred, four hydrogen ions are translocated across the cytoplasmic membrane), and thus conserves the redox energy in a proton gradient. The polypeptide is NAD(P)H-quinone oxidoreductase chain 4 (Prochlorococcus marinus (strain NATL1A)).